A 202-amino-acid chain; its full sequence is NADH-quinone oxidoreductase subunit C (202 aa).

The protein belongs to the complex I 30 kDa subunit family. As to quaternary structure, NDH-1 is composed of 14 different subunits. Subunits NuoB, C, D, E, F, and G constitute the peripheral sector of the complex.

It is found in the cell inner membrane. It catalyses the reaction a quinone + NADH + 5 H(+)(in) = a quinol + NAD(+) + 4 H(+)(out). NDH-1 shuttles electrons from NADH, via FMN and iron-sulfur (Fe-S) centers, to quinones in the respiratory chain. The immediate electron acceptor for the enzyme in this species is believed to be ubiquinone. Couples the redox reaction to proton translocation (for every two electrons transferred, four hydrogen ions are translocated across the cytoplasmic membrane), and thus conserves the redox energy in a proton gradient. In Acidithiobacillus ferrooxidans (strain ATCC 23270 / DSM 14882 / CIP 104768 / NCIMB 8455) (Ferrobacillus ferrooxidans (strain ATCC 23270)), this protein is NADH-quinone oxidoreductase subunit C.